We begin with the raw amino-acid sequence, 199 residues long: Pyridoxal 5'-phosphate synthase subunit PdxT (199 aa).

51 to 53 (GES) contributes to the L-glutamine binding site. The active-site Nucleophile is the Cys83. L-glutamine contacts are provided by residues Arg110 and 137-138 (IR). Residues His172 and Glu174 each act as charge relay system in the active site.

This sequence belongs to the glutaminase PdxT/SNO family. In terms of assembly, in the presence of PdxS, forms a dodecamer of heterodimers. Only shows activity in the heterodimer.

The enzyme catalyses aldehydo-D-ribose 5-phosphate + D-glyceraldehyde 3-phosphate + L-glutamine = pyridoxal 5'-phosphate + L-glutamate + phosphate + 3 H2O + H(+). The catalysed reaction is L-glutamine + H2O = L-glutamate + NH4(+). The protein operates within cofactor biosynthesis; pyridoxal 5'-phosphate biosynthesis. In terms of biological role, catalyzes the hydrolysis of glutamine to glutamate and ammonia as part of the biosynthesis of pyridoxal 5'-phosphate. The resulting ammonia molecule is channeled to the active site of PdxS. The chain is Pyridoxal 5'-phosphate synthase subunit PdxT from Thermoplasma volcanium (strain ATCC 51530 / DSM 4299 / JCM 9571 / NBRC 15438 / GSS1).